Consider the following 1007-residue polypeptide: RNA-binding protein 26 (1007 aa).

Residue lysine 94 forms a Glycyl lysine isopeptide (Lys-Gly) (interchain with G-Cter in SUMO2) linkage. Lysine 106 participates in a covalent cross-link: Glycyl lysine isopeptide (Lys-Gly) (interchain with G-Cter in SUMO1); alternate. Lysine 106 is covalently cross-linked (Glycyl lysine isopeptide (Lys-Gly) (interchain with G-Cter in SUMO2); alternate). Positions 106-118 are enriched in basic and acidic residues; sequence KKEEITKEEEREK. Residues 106 to 241 form a disordered region; sequence KKEEITKEEE…YTPVSSVPSI (136 aa). Position 127 is a phosphoserine (serine 127). Positions 134-168 are enriched in basic and acidic residues; it reads RYRENRSRDERKKDDRSRKRDYDRNPPRRDSYRDR. The segment covering 169-186 has biased composition (basic residues); sequence YNRRRGRSRSYSRSRSRS. Composition is skewed to basic and acidic residues over residues 187–201 and 209–227; these read WSKERLRERDRDRSR and RSRERDLVKPKYDLDRTDP. Polar residues predominate over residues 228-241; sequence LENNYTPVSSVPSI. Residues 288 to 316 form a C3H1-type zinc finger; it reads PMPKKRCRDYDEKGFCMRGDMCPFDHGSD. The segment covering 334–388 has biased composition (pro residues); it reads QPPVVEGPPPPGLPPPPPILTPPPVNLRPPVPPPGPLPPSLPPVTGPPPPLPPLQ. Disordered stretches follow at residues 334 to 404 and 460 to 519; these read QPPV…SSVP and IGLT…TNSP. Over residues 394 to 404 the composition is skewed to low complexity; it reads APPNSATSSVP. Position 496 is a phosphoserine (serine 496). N6-acetyllysine is present on lysine 510. The residue at position 518 (serine 518) is a Phosphoserine. The RRM 1 domain maps to 532-606; it reads TKLELRKVPP…RFIKVYWHRE (75 aa). A Phosphoserine modification is found at serine 616. Coiled-coil stretches lie at residues 719–795 and 823–847; these read DNNE…KAAS and KKMQAGEEVTELRRKYTELQLEAAK. The tract at residues 853 to 884 is disordered; the sequence is SGRGRGIHSRGRGAVHGRGRGRGRGRGVPGHA. Over residues 857 to 877 the composition is skewed to basic residues; the sequence is RGIHSRGRGAVHGRGRGRGRG. Residues 891–960 form the RRM 2 domain; that stretch reads RALEISAFTE…QDLKLAWNKP (70 aa). The tract at residues 966–1007 is disordered; the sequence is AVETEEVEPDEEEFQEESLVDDSLLQDDDEEEEDNESRSWRR. Positions 968-1000 are enriched in acidic residues; it reads ETEEVEPDEEEFQEESLVDDSLLQDDDEEEEDN.

Its function is as follows. May be involved in the turnover of nuclear polyadenylated (pA+) RNA. This is RNA-binding protein 26 from Homo sapiens (Human).